A 148-amino-acid polypeptide reads, in one-letter code: Putative nickel-responsive regulator (148 aa).

The Ni(2+) site is built by His88, His99, His101, and Cys107.

It belongs to the transcriptional regulatory CopG/NikR family. Ni(2+) is required as a cofactor.

Transcriptional regulator. This chain is Putative nickel-responsive regulator, found in Helicobacter pylori (strain Shi470).